The chain runs to 684 residues: MSLLSADALGLLLKNAISASSMRLGRVVHARIVKTLDSPPPPFLANYLINMYSKLDHPESARLVLRLTPARNVVSWTSLISGLAQNGHFSTALVEFFEMRREGVVPNDFTFPCAFKAVASLRLPVTGKQIHALAVKCGRILDVFVGCSAFDMYCKTRLRDDARKLFDEIPERNLETWNAFISNSVTDGRPREAIEAFIEFRRIDGHPNSITFCAFLNACSDWLHLNLGMQLHGLVLRSGFDTDVSVCNGLIDFYGKCKQIRSSEIIFTEMGTKNAVSWCSLVAAYVQNHEDEKASVLYLRSRKDIVETSDFMISSVLSACAGMAGLELGRSIHAHAVKACVERTIFVGSALVDMYGKCGCIEDSEQAFDEMPEKNLVTRNSLIGGYAHQGQVDMALALFEEMAPRGCGPTPNYMTFVSLLSACSRAGAVENGMKIFDSMRSTYGIEPGAEHYSCIVDMLGRAGMVERAYEFIKKMPIQPTISVWGALQNACRMHGKPQLGLLAAENLFKLDPKDSGNHVLLSNTFAAAGRWAEANTVREELKGVGIKKGAGYSWITVKNQVHAFQAKDRSHILNKEIQTTLAKLRNEMEAAGYKPDLKLSLYDLEEEEKAAEVSHHSEKLALAFGLLSLPLSVPIRITKNLRICGDCHSFFKFVSGSVKREIIVRDNNRFHRFKDGICSCKDYW.

PPR repeat units lie at residues 5 to 39 (SADALGLLLKNAISASSMRLGRVVHARIVKTLDSP), 41 to 71 (PPFLANYLINMYSKLDHPESARLVLRLTPAR), 72 to 106 (NVVSWTSLISGLAQNGHFSTALVEFFEMRREGVVP), 107 to 141 (NDFTFPCAFKAVASLRLPVTGKQIHALAVKCGRIL), 142 to 172 (DVFVGCSAFDMYCKTRLRDDARKLFDEIPER), 173 to 207 (NLETWNAFISNSVTDGRPREAIEAFIEFRRIDGHP), 208 to 242 (NSITFCAFLNACSDWLHLNLGMQLHGLVLRSGFDT), 243 to 277 (DVSVCNGLIDFYGKCKQIRSSEIIFTEMGTKNAVS), 278 to 308 (WCSLVAAYVQNHEDEKASVLYLRSRKDIVET), 309 to 343 (SDFMISSVLSACAGMAGLELGRSIHAHAVKACVER), 344 to 374 (TIFVGSALVDMYGKCGCIEDSEQAFDEMPEK), 375 to 409 (NLVTRNSLIGGYAHQGQVDMALALFEEMAPRGCGP), 412 to 442 (NYMTFVSLLSACSRAGAVENGMKIFDSMRST), and 448 to 478 (GAEHYSCIVDMLGRAGMVERAYEFIKKMPIQ). The segment at 483 to 558 (VWGALQNACR…GAGYSWITVK (76 aa)) is type E motif; degenerate. The type E(+) motif; degenerate stretch occupies residues 559 to 589 (NQVHAFQAKDRSHILNKEIQTTLAKLRNEME). Residues 590 to 684 (AAGYKPDLKL…DGICSCKDYW (95 aa)) are type DYW motif.

The protein belongs to the PPR family. PCMP-H subfamily.

Acts as a regulatory factor of isoprenoid biosynthesis. Could bind RNA. This chain is Pentatricopeptide repeat-containing protein At4g14850 (LOI1), found in Arabidopsis thaliana (Mouse-ear cress).